A 660-amino-acid polypeptide reads, in one-letter code: MRRFYRKPFSVPLLNRPHCSSQSHCLYKNGDFLSDDSKCSPLSSSRTSVRWVFNSSSLPPPEWIEPFNDVSDLVKSNRNLLPSPWVSQILNLLDGSASMESNLDGFCRKFLIKLSPNFVSFVLKSDEIREKPDIAWSFFCWSRKQKKYTHNLECYVSLVDVLALAKDVDRIRFVSSEIKKFEFPMTVSAANALIKSFGKLGMVEELLWVWRKMKENGIEPTLYTYNFLMNGLVSAMFVDSAERVFEVMESGRIKPDIVTYNTMIKGYCKAGQTQKAMEKLRDMETRGHEADKITYMTMIQACYADSDFGSCVALYQEMDEKGIQVPPHAFSLVIGGLCKEGKLNEGYTVFENMIRKGSKPNVAIYTVLIDGYAKSGSVEDAIRLLHRMIDEGFKPDVVTYSVVVNGLCKNGRVEEALDYFHTCRFDGLAINSMFYSSLIDGLGKAGRVDEAERLFEEMSEKGCTRDSYCYNALIDAFTKHRKVDEAIALFKRMEEEEGCDQTVYTYTILLSGMFKEHRNEEALKLWDMMIDKGITPTAACFRALSTGLCLSGKVARACKILDELAPMGVILDAACEDMINTLCKAGRIKEACKLADGITERGREVPGRIRTVMINALRKVGKADLAMKLMHSKIGIGYERMGSVKRRVKFTTLLETCFDS.

The N-terminal 12 residues, 1–12 (MRRFYRKPFSVP), are a transit peptide targeting the mitochondrion. 14 PPR repeats span residues 151 to 185 (NLEC…EFPM), 186 to 220 (TVSA…GIEP), 221 to 255 (TLYT…RIKP), 256 to 290 (DIVT…GHEA), 291 to 325 (DKIT…GIQV), 326 to 360 (PPHA…GSKP), 361 to 395 (NVAI…GFKP), 396 to 430 (DVVT…GLAI), 431 to 465 (NSMF…GCTR), 466 to 496 (DSYC…MEEE), 502 to 536 (TVYT…GITP), 537 to 571 (TAAC…GVIL), 574 to 605 (ACED…GREV), and 606 to 640 (PGRI…GYER).

It belongs to the PPR family. P subfamily.

The protein resides in the mitochondrion. This Arabidopsis thaliana (Mouse-ear cress) protein is Pentatricopeptide repeat-containing protein At1g03560, mitochondrial.